The primary structure comprises 352 residues: MDDNKAKALKAALAQIEKQFGKNTIMHLGDNSATLDVDVVSTGSLGLDIALGIGGLPKGRIVEIYGPESSGKTTMTLQAIAACQKQGGVCAFIDAEHALDPVYARKLGVNTDDLLLSQPDNGEQALEITDMLVRSGAIDMIVIDSVAALTPRAEIEGEMGDSHMGLQARLMSQALRKITGNAKRSNCMVLFINQIRMKIGVMFGSPETTTGGNALKFYASVRMDIRRIGAVKNGDEIIGNQTRVKVIKNKMAPPFRQAEFEITYGEGTNHLAEVIDLGVEIGAVGKAGSWYSYGDEKIGQGKANSVLFLKENPAIAEEIEAKIRAEKLGTKDDSKVATVDKANEEQAAEPVQ.

66-73 (GPESSGKT) provides a ligand contact to ATP. The disordered stretch occupies residues 330-352 (TKDDSKVATVDKANEEQAAEPVQ).

This sequence belongs to the RecA family.

It localises to the cytoplasm. Can catalyze the hydrolysis of ATP in the presence of single-stranded DNA, the ATP-dependent uptake of single-stranded DNA by duplex DNA, and the ATP-dependent hybridization of homologous single-stranded DNAs. It interacts with LexA causing its activation and leading to its autocatalytic cleavage. This is Protein RecA from Psychrobacter cryohalolentis (strain ATCC BAA-1226 / DSM 17306 / VKM B-2378 / K5).